The sequence spans 85 residues: Small ribosomal subunit protein uS15 (85 aa).

Belongs to the universal ribosomal protein uS15 family. As to quaternary structure, part of the 30S ribosomal subunit. Forms a bridge to the 50S subunit in the 70S ribosome, contacting the 23S rRNA.

Its function is as follows. One of the primary rRNA binding proteins, it binds directly to 16S rRNA where it helps nucleate assembly of the platform of the 30S subunit by binding and bridging several RNA helices of the 16S rRNA. Forms an intersubunit bridge (bridge B4) with the 23S rRNA of the 50S subunit in the ribosome. The protein is Small ribosomal subunit protein uS15 of Fusobacterium nucleatum subsp. nucleatum (strain ATCC 25586 / DSM 15643 / BCRC 10681 / CIP 101130 / JCM 8532 / KCTC 2640 / LMG 13131 / VPI 4355).